The primary structure comprises 548 residues: T-complex protein 1 subunit theta (548 aa).

Alanine 2 carries the N-acetylalanine modification. Residue serine 23 is modified to Phosphoserine. Tyrosine 30 is subject to Phosphotyrosine. Tyrosine 47 and glycine 48 together coordinate ADP. Aspartate 99 contacts Mg(2+). Glycine 100, threonine 101, asparagine 102, and phenylalanine 103 together coordinate ADP. The ATP site is built by glycine 100, threonine 101, and asparagine 102. Serine 162 carries the post-translational modification Phosphoserine. Positions 169, 170, and 171 each coordinate ADP. Serine 170 and lysine 171 together coordinate ATP. Glycyl lysine isopeptide (Lys-Gly) (interchain with G-Cter in SUMO2) cross-links involve residues lysine 224, lysine 254, and lysine 260. 2 positions are modified to phosphoserine: serine 269 and serine 317. 2 positions are modified to N6-acetyllysine: lysine 318 and lysine 400. Glycine 412 contributes to the ADP binding site. Residue glycine 412 participates in ATP binding. Lysine 459 participates in a covalent cross-link: Glycyl lysine isopeptide (Lys-Gly) (interchain with G-Cter in SUMO1). Position 466 is an N6-acetyllysine (lysine 466). Aspartate 499 provides a ligand contact to ADP. ATP contacts are provided by aspartate 499 and lysine 504. Tyrosine 505 is subject to Phosphotyrosine. The disordered stretch occupies residues 529–548 (PAGGPKPPSGKKDWDEDQND). A Glycyl lysine isopeptide (Lys-Gly) (interchain with G-Cter in SUMO2) cross-link involves residue lysine 534. At serine 537 the chain carries Phosphoserine. Lysine 539 participates in a covalent cross-link: Glycyl lysine isopeptide (Lys-Gly) (interchain with G-Cter in SUMO2).

It belongs to the TCP-1 chaperonin family. Component of the chaperonin-containing T-complex (TRiC), a hexadecamer composed of two identical back-to-back stacked rings enclosing a protein folding chamber. Each ring is made up of eight different subunits: TCP1/CCT1, CCT2, CCT3, CCT4, CCT5, CCT6A/CCT6, CCT7, CCT8. Interacts with PACRG. Interacts with DNAAF4. Interacts with synaptic plasticity regulator PANTS.

It localises to the cytoplasm. Its subcellular location is the cytoskeleton. The protein localises to the microtubule organizing center. It is found in the centrosome. The protein resides in the cilium basal body. The enzyme catalyses ATP + H2O = ADP + phosphate + H(+). Component of the chaperonin-containing T-complex (TRiC), a molecular chaperone complex that assists the folding of actin, tubulin and other proteins upon ATP hydrolysis. The TRiC complex mediates the folding of WRAP53/TCAB1, thereby regulating telomere maintenance. As part of the TRiC complex may play a role in the assembly of BBSome, a complex involved in ciliogenesis regulating transports vesicles to the cilia. This Bos taurus (Bovine) protein is T-complex protein 1 subunit theta (CCT8).